Reading from the N-terminus, the 86-residue chain is Exodeoxyribonuclease 7 small subunit (86 aa).

The protein belongs to the XseB family. Heterooligomer composed of large and small subunits.

The protein resides in the cytoplasm. The catalysed reaction is Exonucleolytic cleavage in either 5'- to 3'- or 3'- to 5'-direction to yield nucleoside 5'-phosphates.. In terms of biological role, bidirectionally degrades single-stranded DNA into large acid-insoluble oligonucleotides, which are then degraded further into small acid-soluble oligonucleotides. This is Exodeoxyribonuclease 7 small subunit from Xanthomonas oryzae pv. oryzae (strain MAFF 311018).